Consider the following 416-residue polypeptide: Enterobactin exporter EntS (416 aa).

The Cytoplasmic segment spans residues 1–21; that stretch reads MNKQSWLLNLSLLKTHPAFRA. A helical transmembrane segment spans residues 22-42; the sequence is VFLARFISIVSLGLLGVAVPV. At 43 to 55 the chain is on the periplasmic side; it reads QIQMMTHSTWQVG. A helical membrane pass occupies residues 56–76; sequence LSVTLTGGAMFVGLMVGGVLA. Topologically, residues 77-83 are cytoplasmic; sequence DRYERKK. A helical transmembrane segment spans residues 84 to 104; it reads VILLARGTCGIGFIGLCLNAL. Over 105 to 109 the chain is Periplasmic; sequence LPEPS. A helical membrane pass occupies residues 110–130; that stretch reads LLAIYLLGLWDGFFASLGVTA. The Cytoplasmic portion of the chain corresponds to 131-156; it reads LLAATPALVGRENLMQAGAITMLTVR. Residues 157–177 form a helical membrane-spanning segment; it reads LGSVISPMIGGLLLATGGVAW. Asn-178 is a topological domain (periplasmic). Residues 179-199 traverse the membrane as a helical segment; sequence YGLAAAGTFITLLPLLSLPAL. Residues 200–218 lie on the Cytoplasmic side of the membrane; it reads PPPPQPREHPLKSLLAGFR. The chain crosses the membrane as a helical span at residues 219 to 239; that stretch reads FLLASPLVGGIALLGGLLTMA. At 240–256 the chain is on the periplasmic side; the sequence is SAVRVLYPALADNWQMS. The chain crosses the membrane as a helical span at residues 257–277; sequence AAQIGFLYAAIPLGAAIGALT. The Cytoplasmic portion of the chain corresponds to 278 to 287; sequence SGKLAHSARP. Residues 288 to 307 traverse the membrane as a helical segment; the sequence is GLLMLLSTLGSFLAIGLFGL. Residues 308–313 are Periplasmic-facing; that stretch reads MPMWIL. A helical membrane pass occupies residues 314–336; the sequence is GVVCLALFGWLSAVSSLLQYTML. Over 337-356 the chain is Cytoplasmic; it reads QTQTPEAMLGRINGLWTAQN. A helical transmembrane segment spans residues 357–377; the sequence is VTGDAIGAALLGGLGAMMTPV. Ala-378 is a topological domain (periplasmic). The helical transmembrane segment at 379–399 threads the bilayer; sequence SASASGFGLLIIGVLLLLVLV. Topologically, residues 400–416 are cytoplasmic; that stretch reads ELRHFRQTPPQVTASDS.

The protein belongs to the major facilitator superfamily. EntS (TC 2.A.1.38) family.

The protein localises to the cell inner membrane. Component of an export pathway for enterobactin. The sequence is that of Enterobactin exporter EntS from Escherichia coli (strain K12 / MC4100 / BW2952).